Here is a 339-residue protein sequence, read N- to C-terminus: WAT1-related protein At5g40210 (339 aa).

A run of 10 helical transmembrane segments spans residues 11-31 (GWILTAMVVTEFSNVGVNTLV), 42-62 (FVVLVYSYTFGSLLLLPLTFF), 74-94 (FSILCNMGILGLIASAFQILG), 104-124 (TLSSAMSNVNPAFTFILAVVF), 140-160 (VLGTILSIIGALVVTLYHGPM), 168-188 (WIIGGGLLALQYILVSVSYLV), 200-220 (VVVTLVHNVCIAVVCAFVSLL), 233-253 (FDITLITVVATGILNSGYYVI), 266-286 (LSMFKPLSILIAAVSTFIFLG), and 289-309 (LYLGSVMGGILISIGFYMVLW). In terms of domain architecture, EamA spans 29 to 154 (TLVKAATSKG…LSIIGALVVT (126 aa)).

The protein belongs to the drug/metabolite transporter (DMT) superfamily. Plant drug/metabolite exporter (P-DME) (TC 2.A.7.4) family.

The protein localises to the membrane. The chain is WAT1-related protein At5g40210 from Arabidopsis thaliana (Mouse-ear cress).